Reading from the N-terminus, the 150-residue chain is Detocs response regulatory protein DtcB (150 aa).

The 149-residue stretch at 2-150 (KILIADDNIQ…TDLIKKITEL (149 aa)) folds into the Response regulatory domain. 4-aspartylphosphate is present on Asp54.

In terms of processing, probably phosphorylated by DtcA.

Possible phosphate scavenger member of the two-component regulatory system Detocs that confers resistance to bacteriophage. When the system (DtcA-DtcB-DtcC) is expressed in a susceptible E.coli (strain MG1655) it confers resistance to bacteriophages T2, T4, T5, T7, SECphi4, SECphi6 and SECphi27; the level of resistance varies, resistance to T2, T7 and SECphi4 is not very high. DtcA probably autophosphorylates upon sensing viral infection, and subsequently transfers the phosphate signal to DtcC which activates it, leading to an antiviral defense; DtcB (this subunit) may scavenge phosphorylation signals from accidental activation of DtcA. This is Detocs response regulatory protein DtcB from Enterobacter cloacae (strain JD6301).